Reading from the N-terminus, the 597-residue chain is Protein disulfide isomerase-like 1-4 (597 aa).

Positions 1–25 (MAFRVLLLFSLTALLIFSAVSPSFA) are cleaved as a signal peptide. Composition is skewed to acidic residues over residues 37–49 (LSFLEDLKEDDVP) and 61–84 (DEFEGGEEEDPDMYNDDDDEEGDF). The disordered stretch occupies residues 37 to 101 (LSFLEDLKED…SDPLPTPEID (65 aa)). Positions 85–208 (SDLGNPDSDP…IVTWVKKKIG (124 aa)) constitute a Thioredoxin 1 domain. Asparagine 112 carries N-linked (GlcNAc...) asparagine glycosylation. Catalysis depends on nucleophile residues cysteine 132 and cysteine 135. Cysteine 132 and cysteine 135 form a disulfide bridge. Asparagine 213 and asparagine 342 each carry an N-linked (GlcNAc...) asparagine glycan. Residues 429-550 (FYKSDPIPEK…FYKFLRKHAT (122 aa)) enclose the Thioredoxin 2 domain. Active-site nucleophile residues include cysteine 471 and cysteine 474. A disulfide bridge links cysteine 471 with cysteine 474. Residue asparagine 524 is glycosylated (N-linked (GlcNAc...) asparagine). Residues 555-597 (LEKPASTESPKTAESTPKVETTETKESPDSTTKSSQSDSKDEL) are disordered. Positions 560 to 573 (STESPKTAESTPKV) are enriched in polar residues. A Prevents secretion from ER motif is present at residues 594–597 (KDEL).

Belongs to the protein disulfide isomerase family. As to quaternary structure, interacts with MEE8 and MED37A. As to expression, expressed in germinating seedling, including the cotyledons and hypocotyl, in vascular tissues, in pollen grains, root tips, leaf trichomes, developing seeds and siliques.

The protein resides in the endoplasmic reticulum lumen. Its subcellular location is the golgi apparatus. It localises to the vacuole. The protein localises to the nucleus. It is found in the secreted. The protein resides in the cell wall. The enzyme catalyses Catalyzes the rearrangement of -S-S- bonds in proteins.. In terms of biological role, acts as a protein-folding catalyst that interacts with nascent polypeptides to catalyze the formation, isomerization, and reduction or oxidation of disulfide bonds. This chain is Protein disulfide isomerase-like 1-4 (PDIL1-4), found in Arabidopsis thaliana (Mouse-ear cress).